The following is a 299-amino-acid chain: Acetaldehyde dehydrogenase (299 aa).

11-14 (SGNI) contributes to the NAD(+) binding site. C126 (acyl-thioester intermediate) is an active-site residue. Residues 157 to 165 (SAGPGTRAN) and N267 contribute to the NAD(+) site.

Belongs to the acetaldehyde dehydrogenase family.

It carries out the reaction acetaldehyde + NAD(+) + CoA = acetyl-CoA + NADH + H(+). The chain is Acetaldehyde dehydrogenase from Bacillus cereus (strain ATCC 10987 / NRS 248).